The chain runs to 330 residues: Glycerol-3-phosphate dehydrogenase [NAD(P)+] 1 (330 aa).

Residues Trp-15, Arg-35, and Lys-105 each coordinate NADPH. The sn-glycerol 3-phosphate site is built by Lys-105, Gly-133, and Thr-135. Ala-137 provides a ligand contact to NADPH. Positions 188, 241, 251, 252, and 253 each coordinate sn-glycerol 3-phosphate. Lys-188 serves as the catalytic Proton acceptor. Arg-252 is a binding site for NADPH. Ile-276 and Glu-278 together coordinate NADPH.

Belongs to the NAD-dependent glycerol-3-phosphate dehydrogenase family.

The protein localises to the cytoplasm. It carries out the reaction sn-glycerol 3-phosphate + NAD(+) = dihydroxyacetone phosphate + NADH + H(+). The catalysed reaction is sn-glycerol 3-phosphate + NADP(+) = dihydroxyacetone phosphate + NADPH + H(+). The protein operates within membrane lipid metabolism; glycerophospholipid metabolism. Catalyzes the reduction of the glycolytic intermediate dihydroxyacetone phosphate (DHAP) to sn-glycerol 3-phosphate (G3P), the key precursor for phospholipid synthesis. The chain is Glycerol-3-phosphate dehydrogenase [NAD(P)+] 1 from Sphingopyxis alaskensis (strain DSM 13593 / LMG 18877 / RB2256) (Sphingomonas alaskensis).